Here is a 322-residue protein sequence, read N- to C-terminus: MVVSISIRGSLLKVSGNPSRWGRLDNLFGLPTLDSCVSVFNTILAEIGLPQFTKCKRLMPGQAKENEKAPLVADGAIIKEVHITSNRAAGKGNEDDYISGLSTQPYRNSVPRLHSNGKSVDWLSKKGNVNLIYPTVYNKAHEMELHSLTKIKNRFSEQSREYNYLLDIISFCKENGVVRFEQKLKSRFLQKNALNYWGLSDYSILNKLHSDFLELDKKLSVNAMDFETISDHLVSSGVVETTRAANTTAMYAIQWFHGHVFDFNKKQVQTHRARLRKIGIDIAQKCNVSKFSPVIVKQTREIKVQECVAPSWYVRPSHLRVA.

It belongs to the inovirus G2P protein family.

It carries out the reaction ATP + (deoxyribonucleotide)n-3'-hydroxyl + 5'-phospho-(deoxyribonucleotide)m = (deoxyribonucleotide)n+m + AMP + diphosphate.. In terms of biological role, isoform G2P plays an essential role in viral DNA replication. Binds the origin of replication and cleaves the dsDNA replicative form I (RFI) and becomes covalently bound to it via phosphotyrosine bond, generating the dsDNA replicative form II (RFII). In turn, viral DNA replication initiates at the 3'-OH of the cleavage site. After one round of rolling circle synthesis, protein G2P is linked to the newly synthesized ssDNA and joins the ends of the displaced strand to generate a circular single-stranded molecule ready to be packed into a virion. Functionally, isoform G10P protein binds to double-stranded DNA and prevents hydrolysis by nucleases. Additionally, G10P is an inhibitor of DNA replication and may have a role in the transition from semiconservative replicative form DNA replication to single-stranded DNA synthesis in the life cycle. This is Replication-associated protein G2P (II) from Escherichia phage If1 (Bacteriophage If1).